The sequence spans 545 residues: Chaperonin GroEL (545 aa).

ATP is bound by residues 29-32, lysine 50, 86-90, glycine 414, 477-479, and aspartate 493; these read TMGP, DGTTT, and DAA.

It belongs to the chaperonin (HSP60) family. Forms a cylinder of 14 subunits composed of two heptameric rings stacked back-to-back. Interacts with the co-chaperonin GroES.

It localises to the cytoplasm. The enzyme catalyses ATP + H2O + a folded polypeptide = ADP + phosphate + an unfolded polypeptide.. Functionally, together with its co-chaperonin GroES, plays an essential role in assisting protein folding. The GroEL-GroES system forms a nano-cage that allows encapsulation of the non-native substrate proteins and provides a physical environment optimized to promote and accelerate protein folding. The protein is Chaperonin GroEL of Campylobacter jejuni subsp. jejuni serotype O:6 (strain 81116 / NCTC 11828).